The sequence spans 410 residues: Translation initiation factor 2 subunit gamma (410 aa).

The tr-type G domain occupies 6–203 (QSEVNIGMVG…AIQEFIPTPE (198 aa)). Residues 15–22 (GHVDHGKT) form a G1 region. Mg(2+) is bound by residues D18, T22, G43, and S45. Position 18-23 (18-23 (DHGKTS)) interacts with GTP. The tract at residues 43–47 (GISIR) is G2. Residues C58, C61, C73, and C76 each coordinate Zn(2+). The interval 90-93 (DAPG) is G3. GTP contacts are provided by residues 146–149 (NKID) and 181–183 (SAH). Positions 146 to 149 (NKID) are G4. A G5 region spans residues 181-183 (SAH).

Belongs to the TRAFAC class translation factor GTPase superfamily. Classic translation factor GTPase family. EIF2G subfamily. As to quaternary structure, heterotrimer composed of an alpha, a beta and a gamma chain. Mg(2+) serves as cofactor.

It catalyses the reaction GTP + H2O = GDP + phosphate + H(+). Its function is as follows. eIF-2 functions in the early steps of protein synthesis by forming a ternary complex with GTP and initiator tRNA. The protein is Translation initiation factor 2 subunit gamma of Methanococcus maripaludis (strain C7 / ATCC BAA-1331).